A 307-amino-acid chain; its full sequence is Ribonuclease Z (307 aa).

Zn(2+) contacts are provided by His64, His66, Asp68, His69, His141, Asp209, and His267. Catalysis depends on Asp68, which acts as the Proton acceptor.

It belongs to the RNase Z family. In terms of assembly, homodimer. Zn(2+) is required as a cofactor.

The enzyme catalyses Endonucleolytic cleavage of RNA, removing extra 3' nucleotides from tRNA precursor, generating 3' termini of tRNAs. A 3'-hydroxy group is left at the tRNA terminus and a 5'-phosphoryl group is left at the trailer molecule.. Its function is as follows. Zinc phosphodiesterase, which displays some tRNA 3'-processing endonuclease activity. Probably involved in tRNA maturation, by removing a 3'-trailer from precursor tRNA. The polypeptide is Ribonuclease Z (Thermoplasma acidophilum (strain ATCC 25905 / DSM 1728 / JCM 9062 / NBRC 15155 / AMRC-C165)).